Here is a 166-residue protein sequence, read N- to C-terminus: Large ribosomal subunit protein mL49 (166 aa).

This sequence belongs to the mitochondrion-specific ribosomal protein mL49 family. In terms of assembly, component of the mitochondrial ribosome large subunit (39S) which comprises a 16S rRNA and about 50 distinct proteins. Interacts with OXA1L.

Its subcellular location is the mitochondrion. In Bos taurus (Bovine), this protein is Large ribosomal subunit protein mL49 (MRPL49).